A 291-amino-acid chain; its full sequence is Glycine--tRNA ligase alpha subunit (291 aa).

Belongs to the class-II aminoacyl-tRNA synthetase family. In terms of assembly, tetramer of two alpha and two beta subunits.

The protein resides in the cytoplasm. The enzyme catalyses tRNA(Gly) + glycine + ATP = glycyl-tRNA(Gly) + AMP + diphosphate. The protein is Glycine--tRNA ligase alpha subunit of Trichlorobacter lovleyi (strain ATCC BAA-1151 / DSM 17278 / SZ) (Geobacter lovleyi).